A 264-amino-acid polypeptide reads, in one-letter code: Glutamate racemase (264 aa).

Substrate contacts are provided by residues 10–11 and 42–43; these read DS and YG. Residue cysteine 73 is the Proton donor/acceptor of the active site. 74-75 contacts substrate; the sequence is NT. Cysteine 183 acts as the Proton donor/acceptor in catalysis. 184 to 185 provides a ligand contact to substrate; sequence TH.

The protein belongs to the aspartate/glutamate racemases family.

The catalysed reaction is L-glutamate = D-glutamate. It participates in cell wall biogenesis; peptidoglycan biosynthesis. Functionally, provides the (R)-glutamate required for cell wall biosynthesis. This Streptococcus pyogenes serotype M2 (strain MGAS10270) protein is Glutamate racemase.